A 101-amino-acid chain; its full sequence is Large ribosomal subunit protein bL28 (101 aa).

The protein belongs to the bacterial ribosomal protein bL28 family.

This chain is Large ribosomal subunit protein bL28, found in Rhodopseudomonas palustris (strain BisB18).